The primary structure comprises 571 residues: Isocitrate dehydrogenase kinase/phosphatase (571 aa).

Residues 318–324 and Lys339 contribute to the ATP site; that span reads APGVRGM. Asp374 is a catalytic residue.

It belongs to the AceK family.

The protein localises to the cytoplasm. It carries out the reaction L-seryl-[isocitrate dehydrogenase] + ATP = O-phospho-L-seryl-[isocitrate dehydrogenase] + ADP + H(+). Bifunctional enzyme which can phosphorylate or dephosphorylate isocitrate dehydrogenase (IDH) on a specific serine residue. This is a regulatory mechanism which enables bacteria to bypass the Krebs cycle via the glyoxylate shunt in response to the source of carbon. When bacteria are grown on glucose, IDH is fully active and unphosphorylated, but when grown on acetate or ethanol, the activity of IDH declines drastically concomitant with its phosphorylation. The sequence is that of Isocitrate dehydrogenase kinase/phosphatase from Pseudomonas putida (strain ATCC 700007 / DSM 6899 / JCM 31910 / BCRC 17059 / LMG 24140 / F1).